We begin with the raw amino-acid sequence, 382 residues long: Pyrimidine monooxygenase RutA (382 aa).

Residues 68–69 (IK), Asn-134, Glu-143, 159–160 (RY), and Ser-209 contribute to the FMN site.

It belongs to the NtaA/SnaA/DszA monooxygenase family. RutA subfamily.

The enzyme catalyses uracil + FMNH2 + NADH + O2 = (Z)-3-ureidoacrylate + FMN + NAD(+) + H2O + H(+). It carries out the reaction thymine + FMNH2 + NADH + O2 = (Z)-2-methylureidoacrylate + FMN + NAD(+) + H2O + H(+). Its function is as follows. Catalyzes the pyrimidine ring opening between N-3 and C-4 by an unusual flavin hydroperoxide-catalyzed mechanism, adding oxygen atoms in the process to yield ureidoacrylate peracid, that immediately reacts with FMN forming ureidoacrylate and FMN-N(5)-oxide. The FMN-N(5)-oxide reacts spontaneously with NADH to produce FMN. Requires the flavin reductase RutF to regenerate FMN in vivo. The polypeptide is Pyrimidine monooxygenase RutA (Escherichia coli (strain K12 / MC4100 / BW2952)).